Consider the following 183-residue polypeptide: MNSYSLLTRSFHESSKPLFNLASTLLKASKRTQLRNELIKQGPKRPTSAYFLYLQDHRSQFVKENPTLRPAEISKIAGEKWQNLEADIKEKYISERKKLYSEYQKAKKEFDEKLPPKKPAGPFIKYANEVRSQVFAQHPDKSQLDLMKIIGDKWQSLDQSIKDKYIQEYKKAIQEYNARYPLN.

A mitochondrion-targeting transit peptide spans 1-26; sequence MNSYSLLTRSFHESSKPLFNLASTLL. DNA-binding regions (HMG box) lie at residues 43-111 and 116-183; these read PKRP…KEFD and PKKP…YPLN.

The protein resides in the mitochondrion. The protein localises to the nucleus. Its function is as follows. Specific binding to the autonomously replicating sequence 1 (ARS1). Interaction with regulatory regions: probably involved in compacting the mitochondrial genome. It might play a positive role in gene expression and replication. The chain is ARS-binding factor 2, mitochondrial (ABF2) from Saccharomyces cerevisiae (strain ATCC 204508 / S288c) (Baker's yeast).